We begin with the raw amino-acid sequence, 448 residues long: Protein odr-4 homolog (448 aa).

The next 2 helical transmembrane spans lie at 76–96 (ASQL…FLMT) and 428–448 (GLLI…YYII).

This sequence belongs to the ODR-4 family.

It is found in the membrane. Functionally, may play a role in the trafficking of a subset of G-protein coupled receptors. The sequence is that of Protein odr-4 homolog (odr4) from Xenopus tropicalis (Western clawed frog).